Consider the following 488-residue polypeptide: Cardiolipin synthase 2 (488 aa).

Transmembrane regions (helical) follow at residues 8-28 (IIIN…AFII) and 39-59 (IWAW…LYLL). PLD phosphodiesterase domains lie at 223–250 (MNNR…GDEY) and 401–428 (DNGF…DNRS). Residues His228, Lys230, Asp235, His406, Lys408, and Asp413 contribute to the active site.

Belongs to the phospholipase D family. Cardiolipin synthase subfamily.

Its subcellular location is the cell membrane. It carries out the reaction 2 a 1,2-diacyl-sn-glycero-3-phospho-(1'-sn-glycerol) = a cardiolipin + glycerol. Catalyzes the reversible phosphatidyl group transfer from one phosphatidylglycerol molecule to another to form cardiolipin (CL) (diphosphatidylglycerol) and glycerol. The chain is Cardiolipin synthase 2 (cls2) from Staphylococcus epidermidis (strain ATCC 35984 / DSM 28319 / BCRC 17069 / CCUG 31568 / BM 3577 / RP62A).